The following is a 51-amino-acid chain: Insulin (51 aa).

3 disulfide bridges follow: Cys-7–Cys-37, Cys-19–Cys-50, and Cys-36–Cys-41.

It belongs to the insulin family. As to quaternary structure, heterodimer of a B chain and an A chain linked by two disulfide bonds.

It is found in the secreted. Functionally, insulin decreases blood glucose concentration. It increases cell permeability to monosaccharides, amino acids and fatty acids. It accelerates glycolysis, the pentose phosphate cycle, and glycogen synthesis in liver. The protein is Insulin (INS) of Hystrix cristata (North African crested porcupine).